The sequence spans 363 residues: MNILQEPIDFLKKDEIKNIDLSQMSKKERYKIWKRIPKCELHCHLDLCFSADFFLSCIRKYNLQPNLSDEEVLDYYLFAKGGKSLGEFVEKAIRVADIFHDYEVIEDLAKHAVFNKYKEGVVLMEFRYSPTFVAFKYKLDIELIHQAIVKGIKEVVELLDHKIHVALMCIGDTGHEAANIKASADFCLKHRADFVGFDHGGHEVDLKQYKEIFDYVRESGIPLSVHAGEDVTLPNLNTLYSAIQVLKVERIGHGIRVSESQELIDMVKEKNILLEVCPISNVLLKNAKSMDTHPIRQLYDAGVKVSVNSDDPGMFLTNINDDYEELYTHLNFTLEDFMKMNEWALEKSFMDSNIKDKVKNLYF.

Zn(2+) is bound by residues H42 and H44. Residues H44–D46, D172, and G201 each bind a purine D-ribonucleoside. The interval I170–A184 is gating helix loop; regulates binding affinity for substrates and thus substrate selectivity. H226 lines the Zn(2+) pocket. The a purine D-ribonucleoside site is built by E229, H253, and D310. D310 serves as a coordination point for Zn(2+).

This sequence belongs to the metallo-dependent hydrolases superfamily. Adenosine and AMP deaminases family. Zn(2+) is required as a cofactor.

It carries out the reaction adenosine + H2O + H(+) = inosine + NH4(+). The enzyme catalyses S-methyl-5'-thioadenosine + H2O + H(+) = S-methyl-5'-thioinosine + NH4(+). The protein operates within purine metabolism; purine nucleoside salvage. Inhibited by coformycin and methylthiocoformycin (MT-coformycin). In terms of biological role, catalyzes the hydrolytic deamination of adenosine to produce inosine. Unlike mammalian adenosine deaminases, also catalyzes the deamination of 5'-methylthioadenosine (MTA), a by-product of polyamine biosynthesis, to produce 5'-methylthioinosine (MTI). Plays an essential role in the purine salvage pathway which allows the parasite to use host cell purines for the synthesis of nucleic acids. This is Adenosine deaminase from Plasmodium cynomolgi (strain B).